Here is a 598-residue protein sequence, read N- to C-terminus: Cytochrome P450 monooxygenase phmB (598 aa).

The helical transmembrane segment at 107–127 threads the bilayer; that stretch reads VAAKIAALLFVAGLFWAVSVL. N-linked (GlcNAc...) asparagine glycans are attached at residues asparagine 171, asparagine 428, and asparagine 494. Heme is bound at residue cysteine 542. N-linked (GlcNAc...) asparagine glycans are attached at residues asparagine 549 and asparagine 581.

The protein belongs to the cytochrome P450 family. Heme serves as cofactor.

It is found in the membrane. The protein operates within mycotoxin biosynthesis. In terms of biological role, cytochrome P450 monooxygenase; part of the gene cluster that mediates the biosynthesis of the mycotoxins phomacins, leucine-derived cytochalasans with potent actin polymerization-inhibitory activities and monocot-specific antigerminative activities. The first step in the pathway is catalyzed by the hybrid PKS-NRPS phmA, assisted by the enoyl reductase phmE, that are responsible for fusion of the leucine precursor and the polyketide backbone to produce a 2-pyrrolidone intermediate. The polyketide synthase module (PKS) of phmA is responsible for the synthesis of the polyketide backbone and the downstream nonribosomal peptide synthetase (NRPS) amidates the carboxyl end of the polyketide with the leucine precursor. Because phmA lacks a designated enoylreductase (ER) domain, the required activity is provided the enoyl reductase phmE. Reduction by the hydrolyase phmG, followed by dehydration and intra-molecular Diels-Alder cyclization by the Diels-Alderase phmD then yield the required isoindolone-fused macrocycle. A number of oxidative steps catalyzed by the tailoring cytochrome P450 monooxygenase phmB, the FAD-linked oxidoreductase phmC and the short-chain dehydrogenase/reductase phmF, are further required to afford the final products, phomacin D and phomacin E. The sequence is that of Cytochrome P450 monooxygenase phmB from Phaeosphaeria nodorum (strain SN15 / ATCC MYA-4574 / FGSC 10173) (Glume blotch fungus).